Here is a 29-residue protein sequence, read N- to C-terminus: Dermaseptin-H7 (29 aa).

Position 29 is a leucine amide (L29).

The protein belongs to the frog skin active peptide (FSAP) family. Dermaseptin subfamily. As to expression, expressed by the skin glands.

It localises to the secreted. Its function is as follows. Has antibacterial activity against the Gram-negative bacterium E.coli and the Gram-positive bacterium S.aureus. Has antiprotozoal activity against L.amazonensis. Has antifungal activity. Has no hemolytic activity. This Pithecopus hypochondrialis (Orange-legged leaf frog) protein is Dermaseptin-H7.